Here is a 486-residue protein sequence, read N- to C-terminus: ATP synthase subunit beta (486 aa).

171–178 (GGAGVGKT) serves as a coordination point for ATP.

The protein belongs to the ATPase alpha/beta chains family. In terms of assembly, F-type ATPases have 2 components, CF(1) - the catalytic core - and CF(0) - the membrane proton channel. CF(1) has five subunits: alpha(3), beta(3), gamma(1), delta(1), epsilon(1). CF(0) has three main subunits: a(1), b(2) and c(9-12). The alpha and beta chains form an alternating ring which encloses part of the gamma chain. CF(1) is attached to CF(0) by a central stalk formed by the gamma and epsilon chains, while a peripheral stalk is formed by the delta and b chains.

Its subcellular location is the cell membrane. The catalysed reaction is ATP + H2O + 4 H(+)(in) = ADP + phosphate + 5 H(+)(out). In terms of biological role, produces ATP from ADP in the presence of a proton gradient across the membrane. The catalytic sites are hosted primarily by the beta subunits. The polypeptide is ATP synthase subunit beta (Salinispora tropica (strain ATCC BAA-916 / DSM 44818 / JCM 13857 / NBRC 105044 / CNB-440)).